A 169-amino-acid chain; its full sequence is uncharacterized protein (169 aa).

Residues Ile-97–Phe-117 form a helical membrane-spanning segment. A disordered region spans residues Asn-137–Tyr-169. The span at Pro-160–Tyr-169 shows a compositional bias: basic and acidic residues.

It localises to the membrane. This is an uncharacterized protein from Caenorhabditis elegans.